We begin with the raw amino-acid sequence, 175 residues long: Disulfide bond formation protein B 2 (175 aa).

At 1–9 (MYLARTRFL) the chain is on the cytoplasmic side. The chain crosses the membrane as a helical span at residues 10-26 (FFLASLACASIIGTAFY). Residues 27-44 (LQQTFGLDPCFLCLIQRA) lie on the Periplasmic side of the membrane. Cys-36 and Cys-39 are disulfide-bonded. Residues 45 to 61 (AIIACGVLALCAACHAP) form a helical membrane-spanning segment. Residues 62–68 (GPTGMRR) are Cytoplasmic-facing. The chain crosses the membrane as a helical span at residues 69–85 (YSLGFLLIALTGLVTAG). The Periplasmic segment spans residues 86–142 (AQVWLQTASADQLIPFITKLEHLLSLLSLDMCIDRLRSDAMFCAEITWTLFGISLPE). Residues 143–161 (WSLLAFTGLALLPLYPLFS) form a helical membrane-spanning segment. At 162-175 (EFSHWLATKDRARY) the chain is on the cytoplasmic side.

Belongs to the DsbB family.

It is found in the cell inner membrane. Required for disulfide bond formation in some periplasmic proteins. Acts by oxidizing the DsbA protein. This Pseudomonas savastanoi pv. phaseolicola (strain 1448A / Race 6) (Pseudomonas syringae pv. phaseolicola (strain 1448A / Race 6)) protein is Disulfide bond formation protein B 2.